Consider the following 558-residue polypeptide: Potassium-transporting ATPase potassium-binding subunit 1 (558 aa).

12 helical membrane-spanning segments follow: residues 1-21 (MEII…SGYL), 66-86 (FNGF…WLFL), 127-147 (MIVM…VCIA), 166-186 (IVRF…ILLM), 245-265 (IWSN…MLFL), 281-301 (ALIL…LTMW), 327-347 (FGAG…TGSV), 354-374 (LTPL…VFGG), 377-397 (VGLM…SLMV), 416-436 (IVLV…LAFM), 482-502 (ISTG…QLMI), and 531-551 (IVFI…LGPI).

This sequence belongs to the KdpA family. The system is composed of three essential subunits: KdpA, KdpB and KdpC.

It is found in the cell membrane. Functionally, part of the high-affinity ATP-driven potassium transport (or Kdp) system, which catalyzes the hydrolysis of ATP coupled with the electrogenic transport of potassium into the cytoplasm. This subunit binds the extracellular potassium ions and delivers the ions to the membrane domain of KdpB through an intramembrane tunnel. The chain is Potassium-transporting ATPase potassium-binding subunit 1 from Staphylococcus aureus (strain MRSA252).